The sequence spans 345 residues: Very-long-chain 3-oxoacyl-CoA reductase (345 aa).

Residues 26-46 form a helical membrane-spanning segment; sequence GAAVLLTTGTLFIASRVLTFV. NADP(+)-binding residues include Val-71, Asp-125, Asp-133, Asn-152, Tyr-219, Lys-223, Ile-252, and Ser-254. The active-site Proton donor is the Tyr-219. Lys-223 functions as the Lowers pKa of active site Tyr in the catalytic mechanism.

It belongs to the short-chain dehydrogenases/reductases (SDR) family.

The protein resides in the endoplasmic reticulum membrane. It carries out the reaction a very-long-chain (3R)-3-hydroxyacyl-CoA + NADP(+) = a very-long-chain 3-oxoacyl-CoA + NADPH + H(+). It participates in lipid metabolism; fatty acid biosynthesis. Its function is as follows. Component of the microsomal membrane bound fatty acid elongation system, which produces the 26-carbon very long-chain fatty acids (VLCFA) from palmitate. Catalyzes the reduction of the 3-ketoacyl-CoA intermediate that is formed in each cycle of fatty acid elongation. VLCFAs serve as precursors for ceramide and sphingolipids. This Aspergillus fumigatus (strain CBS 144.89 / FGSC A1163 / CEA10) (Neosartorya fumigata) protein is Very-long-chain 3-oxoacyl-CoA reductase.